The following is a 130-amino-acid chain: MARQIKKSGARKTKRNAVNGITHIKSTFNNTIVTITNLKGETLSWSSSGASGFKGAKKGTPFAAQTAAEKAARQAMDQGMRQTEVLVNGPGAGRETAIRALQAAGLEITLIKDITPVPHNGCRPPKKRRV.

The protein belongs to the universal ribosomal protein uS11 family. In terms of assembly, part of the 30S ribosomal subunit.

It localises to the plastid. The protein localises to the chloroplast. The protein is Small ribosomal subunit protein uS11c of Pyropia yezoensis (Susabi-nori).